Reading from the N-terminus, the 270-residue chain is Undecaprenyl-diphosphatase (270 aa).

Helical transmembrane passes span 14 to 34, 40 to 60, 88 to 108, 117 to 137, 146 to 166, 189 to 209, 221 to 241, and 249 to 269; these read GLTE…PTFL, GITF…LYFW, FYII…ETTI, SLIA…DTSG, ITLK…IPGV, FSFL…LSGL, PLLI…AFLL, and LYPF…FINF.

The protein belongs to the UppP family.

It localises to the cell inner membrane. The enzyme catalyses di-trans,octa-cis-undecaprenyl diphosphate + H2O = di-trans,octa-cis-undecaprenyl phosphate + phosphate + H(+). Catalyzes the dephosphorylation of undecaprenyl diphosphate (UPP). Confers resistance to bacitracin. This Geotalea daltonii (strain DSM 22248 / JCM 15807 / FRC-32) (Geobacter daltonii) protein is Undecaprenyl-diphosphatase.